Here is a 161-residue protein sequence, read N- to C-terminus: Allophycocyanin subunit alpha-B (161 aa).

Position 71 is an N4-methylasparagine (N71). A (2R,3E)-phycocyanobilin-binding site is contributed by C81.

This sequence belongs to the phycobiliprotein family. As to quaternary structure, heterohexamer of two alpha chains, one alpha-B chain and three beta chains. In terms of processing, contains one covalently linked bilin chromophore.

The protein resides in the cellular thylakoid membrane. Light-harvesting photosynthetic bile pigment-protein from the phycobiliprotein complex. Allophycocyanin has a maximum absorption at approximately 654 nanometers. This chain is Allophycocyanin subunit alpha-B (apcD), found in Synechocystis sp. (strain ATCC 27184 / PCC 6803 / Kazusa).